Consider the following 604-residue polypeptide: Deuterosome assembly protein 1 (604 aa).

4 coiled-coil regions span residues 14 to 59, 85 to 197, 226 to 278, and 336 to 399; these read CEAE…NAQT, MTQN…GKKQ, IIEK…ELQS, and QDQP…KQLK. Phosphoserine is present on Ser547. Residues 558–601 are a coiled coil; it reads AAQHFLLEEEKRAKELEKLLNTHIDELQRHTEFTLNKYSKLKQN.

The protein belongs to the CEP63 family. Interacts with CEP152; the interaction is mutually exclusive with CEP63.

It is found in the cytoplasm. Its function is as follows. Key structural component of the deuterosome, a structure that promotes de novo centriole amplification in multiciliated cells. Deuterosome-mediated centriole amplification occurs in terminally differentiated multiciliated cells and can generate more than 100 centrioles. Probably sufficient for the specification and formation of the deuterosome inner core. Interacts with CEP152 and recruits PLK4 to activate centriole biogenesis. The polypeptide is Deuterosome assembly protein 1 (Homo sapiens (Human)).